The sequence spans 414 residues: Sensor protein CutS (414 aa).

The segment covering 1–15 (MATTPAPPGAPPKPT) has biased composition (pro residues). Residues 1–21 (MATTPAPPGAPPKPTWDPRSA) form a disordered region. The next 2 membrane-spanning stretches (helical) occupy residues 37-57 (LLYG…IYLL) and 121-141 (SLLA…AMAG). Residues 142 to 194 (RVLSPLGRITRTARAVAGSDLSRRIELDGPDDELKELADTFDDMLERLQRAFT) form the HAMP domain. Residues 202–414 (NASHELRTPL…GLVMRVTLPV (213 aa)) enclose the Histidine kinase domain. H205 is subject to Phosphohistidine; by autocatalysis.

It is found in the cell membrane. It carries out the reaction ATP + protein L-histidine = ADP + protein N-phospho-L-histidine.. In terms of biological role, member of the two-component regulatory system CutS/CutR, involved in the regulation of copper metabolism. The chain is Sensor protein CutS (cutS) from Streptomyces coelicolor (strain ATCC BAA-471 / A3(2) / M145).